The following is a 636-amino-acid chain: Nucleolin 2 (636 aa).

Disordered regions lie at residues 1 to 386 (MGKS…SKTL), 458 to 481 (ANER…SRTI), and 544 to 636 (SEIG…NDEE). 2 stretches are compositionally biased toward basic and acidic residues: residues 43–63 (KELI…KKVE) and 76–89 (EKTK…KDES). Acidic residues predominate over residues 90–103 (SSEEEDDSSSDEEI). Basic and acidic residues predominate over residues 104–118 (APAKKRPEPIKKAKV). 3 stretches are compositionally biased toward acidic residues: residues 122–133 (SSDDDSTSDEET), 152–163 (SSDDDSSSDEET), and 182–193 (SSDDDSSSDEET). Positions 224–238 (TPAKKEPIVVKKDSS) are enriched in basic and acidic residues. 3 stretches are compositionally biased toward acidic residues: residues 267-278 (SSEEESSSDDEP), 299-311 (SSEE…ESDD), and 331-341 (SSDESSDESDK). A compositionally biased stretch (basic and acidic residues) spans 342-367 (EESKDEKVTPKKKDSDVEMVDAEQKS). The segment covering 368 to 383 (NAKQPKTPTNQTQGGS) has biased composition (polar residues). RRM domains are found at residues 384 to 460 (KTLF…LANE) and 479 to 558 (RTIY…ESRP). A compositionally biased stretch (polar residues) spans 464–481 (PRNSNPGRKGEGSQSRTI). Basic and acidic residues-rich tracts occupy residues 552-566 (HVEE…EGRS) and 579-604 (RHSD…DRGA). The span at 622-636 (MESSKGTKTVFNDEE) shows a compositional bias: polar residues.

As to quaternary structure, interacts with THAL in the nucleus. In terms of tissue distribution, expressed at low levels in flower buds.

The protein localises to the nucleus. It is found in the nucleolus. Functionally, involved in pre-rRNA processing and ribosome assembly. The polypeptide is Nucleolin 2 (Arabidopsis thaliana (Mouse-ear cress)).